Here is a 212-residue protein sequence, read N- to C-terminus: Thymidylate kinase (212 aa).

Residue 15–22 (GIDGAGKS) coordinates ATP.

The protein belongs to the thymidylate kinase family.

The enzyme catalyses dTMP + ATP = dTDP + ADP. Functionally, phosphorylation of dTMP to form dTDP in both de novo and salvage pathways of dTTP synthesis. The polypeptide is Thymidylate kinase (Chromobacterium violaceum (strain ATCC 12472 / DSM 30191 / JCM 1249 / CCUG 213 / NBRC 12614 / NCIMB 9131 / NCTC 9757 / MK)).